The primary structure comprises 226 residues: uncharacterized protein (226 aa).

The ABC transporter domain occupies 4 to 226 (LQFQQVGYWY…FTVKENVAVV (223 aa)). 38–45 (GTSGTGKT) lines the ATP pocket.

This sequence belongs to the ABC transporter superfamily.

This is an uncharacterized protein from Bacillus subtilis (strain 168).